The primary structure comprises 493 residues: Ketol-acid reductoisomerase (NADP(+)) (493 aa).

A KARI N-terminal Rossmann domain is found at 15–208; the sequence is AQLGKCRFMQ…GGDRAGVLES (194 aa). Residues 45 to 48, arginine 68, arginine 76, serine 78, and 108 to 110 contribute to the NADP(+) site; these read CGAQ and DKQ. Residue histidine 132 is part of the active site. Residue glycine 158 participates in NADP(+) binding. KARI C-terminal knotted domains lie at 209–344 and 345–486; these read SFVA…NALA and FAGK…MKDM. Residues aspartate 217, glutamate 221, glutamate 389, and glutamate 393 each contribute to the Mg(2+) site. Residue serine 414 participates in substrate binding.

It belongs to the ketol-acid reductoisomerase family. It depends on Mg(2+) as a cofactor.

The enzyme catalyses (2R)-2,3-dihydroxy-3-methylbutanoate + NADP(+) = (2S)-2-acetolactate + NADPH + H(+). The catalysed reaction is (2R,3R)-2,3-dihydroxy-3-methylpentanoate + NADP(+) = (S)-2-ethyl-2-hydroxy-3-oxobutanoate + NADPH + H(+). It functions in the pathway amino-acid biosynthesis; L-isoleucine biosynthesis; L-isoleucine from 2-oxobutanoate: step 2/4. It participates in amino-acid biosynthesis; L-valine biosynthesis; L-valine from pyruvate: step 2/4. In terms of biological role, involved in the biosynthesis of branched-chain amino acids (BCAA). Catalyzes an alkyl-migration followed by a ketol-acid reduction of (S)-2-acetolactate (S2AL) to yield (R)-2,3-dihydroxy-isovalerate. In the isomerase reaction, S2AL is rearranged via a Mg-dependent methyl migration to produce 3-hydroxy-3-methyl-2-ketobutyrate (HMKB). In the reductase reaction, this 2-ketoacid undergoes a metal-dependent reduction by NADPH to yield (R)-2,3-dihydroxy-isovalerate. This Aeromonas salmonicida (strain A449) protein is Ketol-acid reductoisomerase (NADP(+)).